The following is a 205-amino-acid chain: GTP cyclohydrolase 1 (205 aa).

The Zn(2+) site is built by cysteine 95, histidine 98, and cysteine 166.

Belongs to the GTP cyclohydrolase I family. In terms of assembly, toroid-shaped homodecamer, composed of two pentamers of five dimers.

It catalyses the reaction GTP + H2O = 7,8-dihydroneopterin 3'-triphosphate + formate + H(+). Its pathway is cofactor biosynthesis; 7,8-dihydroneopterin triphosphate biosynthesis; 7,8-dihydroneopterin triphosphate from GTP: step 1/1. The polypeptide is GTP cyclohydrolase 1 (Maricaulis maris (strain MCS10) (Caulobacter maris)).